Consider the following 432-residue polypeptide: uncharacterized protein (432 aa).

At lysine 243 the chain carries N6-(pyridoxal phosphate)lysine.

It belongs to the class-II pyridoxal-phosphate-dependent aminotransferase family. Requires pyridoxal 5'-phosphate as cofactor.

The protein localises to the cytoplasm. This is an uncharacterized protein from Methanocaldococcus jannaschii (strain ATCC 43067 / DSM 2661 / JAL-1 / JCM 10045 / NBRC 100440) (Methanococcus jannaschii).